Reading from the N-terminus, the 136-residue chain is uncharacterized protein (136 aa).

To E.coli YcgX and YdfO.

This is an uncharacterized protein from Escherichia coli (strain K12).